Here is a 306-residue protein sequence, read N- to C-terminus: Flavin adenine dinucleotide synthase (306 aa).

FAD contacts are provided by residues S59, I107, G164, 182–185 (DSNW), R190, and R300.

The protein belongs to the PAPS reductase family. FAD1 subfamily.

It is found in the cytoplasm. The enzyme catalyses FMN + ATP + H(+) = FAD + diphosphate. Its pathway is cofactor biosynthesis; FAD biosynthesis; FAD from FMN: step 1/1. Catalyzes the adenylation of flavin mononucleotide (FMN) to form flavin adenine dinucleotide (FAD) coenzyme. This chain is Flavin adenine dinucleotide synthase, found in Saccharomyces cerevisiae (strain ATCC 204508 / S288c) (Baker's yeast).